A 110-amino-acid polypeptide reads, in one-letter code: uncharacterized protein (110 aa).

Residues 88 to 108 traverse the membrane as a helical segment; sequence LTRICLLIFGIGLVVLIFLKL.

It localises to the membrane. This is an uncharacterized protein from Rickettsia prowazekii (strain Madrid E).